A 312-amino-acid chain; its full sequence is Olfactory receptor 10P22 (312 aa).

Over 1-26 (MGDDNDTDITEFILLGFSGYGFLQGH) the chain is Extracellular. N5 is a glycosylation site (N-linked (GlcNAc...) asparagine). A helical membrane pass occupies residues 27–47 (LFWGVLCIYVVTLLGNSLIVL). At 48–57 (LTLADSALHS) the chain is on the cytoplasmic side. A helical transmembrane segment spans residues 58–78 (PMYFFLRHFSVVEILYTTTIV). Topologically, residues 79–89 (PRMLADLRSSC) are extracellular. Residues 90–110 (PTIPLASCFTQLYFFALFGIA) traverse the membrane as a helical segment. The Cytoplasmic portion of the chain corresponds to 111-143 (ECCLLTAMAYDRYAAICCPLHYTTLMSQGTYTG). A helical membrane pass occupies residues 144 to 164 (LVGASYLAGVISGTTHSIFIF). Residues 165–205 (TLPFRGAKTIHHFLCDILPVLRLATASTFWGEVGNLFVTIT) are Extracellular-facing. Residues 206–226 (FIFVPFLLIVASYACILVTIL) traverse the membrane as a helical segment. The Cytoplasmic portion of the chain corresponds to 227 to 236 (GVATSQGRQK). A helical transmembrane segment spans residues 237–257 (LFSTCSSHLFVVILFFGTATV). Over 258–271 (AYMRPQADSFGNTD) the chain is Extracellular. A helical membrane pass occupies residues 272 to 292 (QILTLVYTVVTPMCNPFVYSL). Residues 293 to 312 (RNKEVTGAMRRLMKRYLWGP) are Cytoplasmic-facing.

Belongs to the G-protein coupled receptor 1 family.

The protein localises to the cell membrane. Odorant receptor. This is Olfactory receptor 10P22 from Mus musculus (Mouse).